A 211-amino-acid chain; its full sequence is MTGTLVLVRHGQSDWNLKNLFTGWRDPDLTDLGVQEANAGGKALKDYGIQFDIAFTSDLSRAQKTCGIILDNLGQSGLETIRDQALNERDYGDLSGLNKDDARAKWGEEQVHIWRRSYDIPPPGGESLRDTGARVWPYYLTEILPRVLRGEKVLVAAHGNSLRSLVMVLDKLTKEQILSVNLATGVPMVYKLNADSTVASKDVLGDMSGAH.

Substrate is bound by residues 9-16 (RHGQSDWN), 22-23 (TG), Arg-61, 88-91 (ERDY), Lys-99, 115-116 (RR), and 159-160 (GN). Residue His-10 is the Tele-phosphohistidine intermediate of the active site. Catalysis depends on Glu-88, which acts as the Proton donor/acceptor.

This sequence belongs to the phosphoglycerate mutase family. BPG-dependent PGAM subfamily. As to quaternary structure, homodimer.

It carries out the reaction (2R)-2-phosphoglycerate = (2R)-3-phosphoglycerate. The protein operates within carbohydrate degradation; glycolysis; pyruvate from D-glyceraldehyde 3-phosphate: step 3/5. Functionally, catalyzes the interconversion of 2-phosphoglycerate and 3-phosphoglycerate. The polypeptide is 2,3-bisphosphoglycerate-dependent phosphoglycerate mutase (Allorhizobium ampelinum (strain ATCC BAA-846 / DSM 112012 / S4) (Agrobacterium vitis (strain S4))).